A 450-amino-acid polypeptide reads, in one-letter code: IMP-specific 5'-nucleotidase 1 (450 aa).

ATP is bound at residue His144. The active-site Nucleophile is the Asp172. IMP is bound by residues Asp172, Asp174, Asp180, Thr208, Asp376, and Lys384. Mg(2+) is bound by residues Asp172 and Asp174. Asp174 serves as the catalytic Proton donor. Residue Asp411 participates in Mg(2+) binding.

The protein belongs to the ISN1 family. As to quaternary structure, homotetramer. Mg(2+) serves as cofactor.

It catalyses the reaction IMP + H2O = inosine + phosphate. Its activity is regulated as follows. Allosterically activated by ATP. ATP binding is a prerequisite to magnesium and substrate binding. ATP binds to 2 of the subunits in the homotetramer inducing a closure of these 2 subunits and the release of the C-terminal loop, thereby activating the enzyme. Functionally, IMP-specific 5'-nucleotidase involved in IMP (inosine 5'-phosphate) degradation. The polypeptide is IMP-specific 5'-nucleotidase 1 (ISN1) (Saccharomyces cerevisiae (strain ATCC 204508 / S288c) (Baker's yeast)).